The sequence spans 154 residues: Protein X (154 aa).

The interval 68–117 (PCALRFTSARRMETTVNAHQFLPKVLHKRTLGLSVMSTTDLEAYFKDCLF) is mitochondrial targeting sequence.

This sequence belongs to the orthohepadnavirus protein X family. In terms of assembly, may form homodimer. May interact with host CEBPA, CFLAR, CREB1, DDB1, E4F1, HBXIP, HSPD1/HSP60, NFKBIA, POLR2E and SMAD4. Interacts with host SMC5-SMC6 complex and induces its degradation. Interacts with host TRPC4AP; leading to prevent ubiquitination of TRPC4AP. Interacts with host PLSCR1; this interaction promotes ubiquitination and degradation of HBx and impairs HBx-mediated cell proliferation. Post-translationally, a fraction may be phosphorylated in insect cells and HepG2 cells, a human hepatoblastoma cell line. Phosphorylated in vitro by host protein kinase C or mitogen-activated protein kinase. N-acetylated in insect cells.

It is found in the host cytoplasm. The protein resides in the host nucleus. It localises to the host mitochondrion. In terms of biological role, multifunctional protein that plays a role in silencing host antiviral defenses and promoting viral transcription. Does not seem to be essential for HBV infection. May be directly involved in development of cirrhosis and liver cancer (hepatocellular carcinoma). Most of cytosolic activities involve modulation of cytosolic calcium. The effect on apoptosis is controversial depending on the cell types in which the studies have been conducted. May induce apoptosis by localizing in mitochondria and causing loss of mitochondrial membrane potential. May also modulate apoptosis by binding host CFLAR, a key regulator of the death-inducing signaling complex (DISC). Promotes viral transcription by using the host E3 ubiquitin ligase DDB1 to target the SMC5-SMC6 complex to proteasomal degradation. This host complex would otherwise bind to viral episomal DNA, and prevents its transcription. Moderately stimulates transcription of many different viral and cellular transcription elements. Promoters and enhancers stimulated by HBx contain DNA binding sites for NF-kappa-B, AP-1, AP-2, c-EBP, ATF/CREB, or the calcium-activated factor NF-AT. This is Protein X from Hepatitis B virus genotype D (isolate France/alpha1/1989) (HBV-D).